We begin with the raw amino-acid sequence, 230 residues long: Antiholin-like protein LrgB (230 aa).

The next 8 membrane-spanning stretches (helical) occupy residues 5 to 25 (MTPY…TLLF), 30 to 50 (GFFL…FLKV), 61 to 81 (GGKM…IPLY), 92 to 112 (WQIL…VYIV), 126 to 146 (MLPQ…IGGI), 149 to 169 (ITSF…ALFL), 177 to 197 (PIAK…AVGI), and 209 to 229 (IAVT…MPFI).

This sequence belongs to the CidB/LrgB family. LrgB subfamily.

The protein localises to the cell membrane. Its function is as follows. Inhibits the expression or activity of extracellular murein hydrolases by interacting, possibly with LrgA, with the holin-like protein CidA. The LrgAB and CidA proteins may affect the proton motive force of the membrane. May be involved in programmed cell death (PCD), possibly triggering PCD in response to antibiotics and environmental stresses. This is Antiholin-like protein LrgB from Bacillus mycoides (strain KBAB4) (Bacillus weihenstephanensis).